The chain runs to 270 residues: Small ribosomal subunit protein bS1m (270 aa).

Residues T218 to Q250 are disordered.

Belongs to the bacterial ribosomal protein bS1 family.

The protein localises to the mitochondrion. The protein is Small ribosomal subunit protein bS1m (RPS1) of Marchantia polymorpha (Common liverwort).